The sequence spans 294 residues: G-protein coupled receptor homolog U51 (294 aa).

Residues 1–14 are Extracellular-facing; sequence MKNIDLTNWKLLAE. Residues 15–35 form a helical membrane-spanning segment; it reads IYEYLFFFSFFFLCLLVIIVV. Residues 36-47 lie on the Cytoplasmic side of the membrane; that stretch reads KFNNSTVGREYT. Residues 48-68 form a helical membrane-spanning segment; sequence FSTFSGMLVYILLLPVKMGML. Residues 69 to 79 lie on the Extracellular side of the membrane; the sequence is TKMWDVSTDYC. Residues 80 to 102 traverse the membrane as a helical segment; it reads IILMFLSDFSFIFSSWALTLLAL. Residues 103-119 are Cytoplasmic-facing; that stretch reads ERINNFSFSEIKVNETK. The helical transmembrane segment at 120–140 threads the bilayer; sequence ILKQMSFPIIWVTSIFQAVQI. Residues 141-166 lie on the Extracellular side of the membrane; the sequence is SMKYKKSQMNLEDDYCLLAIERSAEE. A helical transmembrane segment spans residues 167-187; it reads AWILLMYTVVIPTFIVFFYVL. At 188 to 200 the chain is on the cytoplasmic side; the sequence is NKRFLFLERDLNS. The helical transmembrane segment at 201–221 threads the bilayer; that stretch reads IVTHLSLFLFFGALCFFPASV. The Extracellular portion of the chain corresponds to 222 to 236; the sequence is LNEFNCNRLFYGLHE. The chain crosses the membrane as a helical span at residues 237–257; sequence LLIVCLELKIFYVPTMTYIIS. The Cytoplasmic portion of the chain corresponds to 258–294; that stretch reads CENYRLAAKAFFCKCFKPCFLMPSLRKLQQPTKSTQF.

This sequence belongs to the G-protein coupled receptor 1 family.

Its subcellular location is the host cell membrane. The protein is G-protein coupled receptor homolog U51 (U51) of Human herpesvirus 7 (strain JI) (HHV-7).